Here is a 706-residue protein sequence, read N- to C-terminus: Polycomb protein SCMH1 (706 aa).

MBT repeat units follow at residues 28–126 (FTWD…LQPP) and 134–235 (SSWP…LQPP). Disordered stretches follow at residues 233 to 350 (QPPG…TVPS) and 576 to 595 (GSDR…RDPS). 2 stretches are compositionally biased toward basic residues: residues 272-283 (RGRKPGKKRGRT) and 304-319 (FPKK…RKPR). Residues 329-340 (PTTSTPEPDTST) are compositionally biased toward low complexity. Positions 576 to 591 (GSDRHLESRDPPRLSG) are enriched in basic and acidic residues. The SAM domain occupies 597 to 662 (WTVEDVMQFV…SFHIDRLKQV (66 aa)).

Belongs to the SCM family. Associates with a PRC1-like complex. Interacts with the SAM domain of PHC1 via its SAM domain in vitro. As to expression, most abundant in testis. Moderate levels detected in heart, brain, lung, liver, skeletal muscle and kidney and lower levels in spleen.

Its subcellular location is the nucleus. Functionally, associates with Polycomb group (PcG) multiprotein complexes; the complex class is required to maintain the transcriptionally repressive state of some genes. The chain is Polycomb protein SCMH1 from Mus musculus (Mouse).